A 282-amino-acid polypeptide reads, in one-letter code: Acyl-CoA-binding domain-containing protein 6 (282 aa).

The interval 1–34 is disordered; that stretch reads MATPFLPAGATTGDSGGELSSGDDSGDLESFQTP. Ser41 is subject to Phosphoserine. An ACB domain is found at 42–127; that stretch reads LAELFEKAAA…VKKLDPGWNP (86 aa). Residues 69 to 73 and Lys95 each bind an acyl-CoA; that span reads YARYK. Residue Ser106 is modified to Phosphoserine. Position 114 (Tyr114) interacts with an acyl-CoA. 2 ANK repeats span residues 191–220 and 224–253; these read EGRALLHWACDRGHKELVKVLLQCEAGINC and EGQTALHYAAACEFSDIVELLLQSGADPTL.

Monomer.

Its subcellular location is the cytoplasm. It is found in the nucleus. Its function is as follows. Binds long-chain acyl-coenzyme A molecules with a strong preference for unsaturated C18:1-CoA, lower affinity for unsaturated C20:4-CoA, and very weak affinity for saturated C16:0-CoA. Does not bind fatty acids. Plays a role in protein N-myristoylation. This Rattus norvegicus (Rat) protein is Acyl-CoA-binding domain-containing protein 6 (Acbd6).